A 1480-amino-acid chain; its full sequence is Nonribosomal peptide synthetase-like enzyme fsqF (1480 aa).

Residues 31-59 are disordered; that stretch reads SPFADEPSIDVPSTHLPVVTPRSKTANDR. An adenylation domain region spans residues 132–527; that stretch reads DSARATPHAP…VGRTDDQVKY (396 aa). One can recognise a Carrier domain in the interval 662 to 741; sequence STARTIAREY…SIASLIDANS (80 aa). Serine 700 is subject to O-(pantetheine 4'-phosphoryl)serine. Over residues 739 to 754 the composition is skewed to polar residues; the sequence is ANSSPGRGQPLNTQET. Residues 739–773 form a disordered region; that stretch reads ANSSPGRGQPLNTQETARLPLRSNGPAPSQQALER. The tract at residues 780-1003 is NAD-binding domain; sequence LTGASGFLGI…ACVELGFYNG (224 aa). The tract at residues 1100 to 1465 is aminotransferase domain; sequence NAAGTVVHRE…YNTVAEVQEF (366 aa).

This sequence belongs to the NRP synthetase family.

It functions in the pathway secondary metabolite biosynthesis. In terms of biological role, nonribosomal peptide synthetase-like enzyme; part of the gene cluster that mediates the biosynthesis of the isoquinoline alkaloids fumisoquin A, fumisoquin B and fumisoquin C; as well as small amounts of fumipyrrole as a shunt metabolite. The products of the cluster lead to a brown coloration and are important for growth and conidiation. The nonribosomal peptide synthetase-like protein fsqF, which lacks a canonical condensation domain, is required for addition of a serine-derived dehydroalanine moiety to activated tyrosine but is not essential for the subsequent steps leading to isoquinoline formation. A different enzyme, most likely the ATP-grasp enzyme fsqD, is responsible for activation of tyrosine. Three additional enzymes encoded by the fsq cluster, the N-methyltransferase fsqC, the phenol 2-monooxygenase fsqG and the FAD-dependent oxidase fsqB, catalyze the formation of the isoquinoline ring system in the fumisoquins. FsqB converts the fspF thiolation domain-bound (2S,4S,5S)-2-amino-6-(3,4-dihydroxyphenyl)-4-hydroxy-5-(methylamino)hexanoyl into isoquinoline. The cyclization most likely proceeds via a two-step mechanism, beginning with FAD-dependent oxidation of the methyl group to an iminium species followed by electrophilic attack on the deprotonated phenol. The chain is Nonribosomal peptide synthetase-like enzyme fsqF from Aspergillus fumigatus (strain ATCC MYA-4609 / CBS 101355 / FGSC A1100 / Af293) (Neosartorya fumigata).